Consider the following 396-residue polypeptide: MNQAENRIDQILKRGVAEVIVEEDFKKLLLSGKKLRLKEGFDPSSPDIHLGHMVALRKLRQLQDLGHQVVLIVGDWTAQIGDPSGASVTRPMLSAEQVKANAKTYLEQFFKIVDKDKTEVRWQSEWYANFKLEDVVRLSSKFTVAQMLARDDFAKRYAAGKPISVTELLYPMLQAYDSVMVKSDVEFGGTDQKFNLLVGRELQEMLGQKPQQVLMVPILVGTDGVHKMSKSLGNYIGVAEEPTEIFGKCMSIPDELILQYFELVTDIPATEIADFKNQMANGLVNPMVLKKRLARELITQLYSAAAAEEADAQFTRVVQRGEIPEDMPECRLENGESICVIDFIIKADLAKSKSEARRLLEQGGVEINSAKISDPGTTVKCGDIIKAGKRRYSKAV.

Positions 43-52 match the 'HIGH' region motif; sequence PSSPDIHLGH. The 'KMSKS' region motif lies at 227-231; the sequence is KMSKS. Lys230 lines the ATP pocket. The region spanning 338–396 is the S4 RNA-binding domain; the sequence is ICVIDFIIKADLAKSKSEARRLLEQGGVEINSAKISDPGTTVKCGDIIKAGKRRYSKAV.

The protein belongs to the class-I aminoacyl-tRNA synthetase family. TyrS type 2 subfamily. Homodimer.

Its subcellular location is the cytoplasm. The catalysed reaction is tRNA(Tyr) + L-tyrosine + ATP = L-tyrosyl-tRNA(Tyr) + AMP + diphosphate + H(+). Catalyzes the attachment of tyrosine to tRNA(Tyr) in a two-step reaction: tyrosine is first activated by ATP to form Tyr-AMP and then transferred to the acceptor end of tRNA(Tyr). This Dehalococcoides mccartyi (strain ATCC BAA-2266 / KCTC 15142 / 195) (Dehalococcoides ethenogenes (strain 195)) protein is Tyrosine--tRNA ligase.